The following is a 347-amino-acid chain: Quinolinate synthase (347 aa).

2 residues coordinate iminosuccinate: histidine 47 and serine 68. Cysteine 113 lines the [4Fe-4S] cluster pocket. Iminosuccinate is bound by residues 139-141 and serine 156; that span reads YAN. Residue cysteine 200 participates in [4Fe-4S] cluster binding. Iminosuccinate-binding positions include 226–228 and threonine 243; that span reads HPE. Cysteine 297 is a binding site for [4Fe-4S] cluster.

It belongs to the quinolinate synthase family. Type 1 subfamily. The cofactor is [4Fe-4S] cluster.

Its subcellular location is the cytoplasm. The enzyme catalyses iminosuccinate + dihydroxyacetone phosphate = quinolinate + phosphate + 2 H2O + H(+). It functions in the pathway cofactor biosynthesis; NAD(+) biosynthesis; quinolinate from iminoaspartate: step 1/1. Catalyzes the condensation of iminoaspartate with dihydroxyacetone phosphate to form quinolinate. The sequence is that of Quinolinate synthase from Escherichia coli (strain K12 / MC4100 / BW2952).